Consider the following 224-residue polypeptide: Probable GTP-binding protein EngB (224 aa).

The 175-residue stretch at 31–205 (IGVEIAFAGR…LSILNDWCHP (175 aa)) folds into the EngB-type G domain. GTP-binding positions include 39–46 (GRSNAGKS), 66–70 (GRTQL), 84–87 (DLPG), 151–154 (TKSD), and 184–186 (LSS). Ser46 and Thr68 together coordinate Mg(2+).

This sequence belongs to the TRAFAC class TrmE-Era-EngA-EngB-Septin-like GTPase superfamily. EngB GTPase family. Mg(2+) is required as a cofactor.

Necessary for normal cell division and for the maintenance of normal septation. The protein is Probable GTP-binding protein EngB of Shewanella frigidimarina (strain NCIMB 400).